We begin with the raw amino-acid sequence, 581 residues long: Arginine--tRNA ligase (581 aa).

The 'HIGH' region motif lies at 122-132; the sequence is PNVAKPMHVGH.

The protein belongs to the class-I aminoacyl-tRNA synthetase family. In terms of assembly, monomer.

Its subcellular location is the cytoplasm. The catalysed reaction is tRNA(Arg) + L-arginine + ATP = L-arginyl-tRNA(Arg) + AMP + diphosphate. The protein is Arginine--tRNA ligase of Francisella tularensis subsp. tularensis (strain FSC 198).